A 359-amino-acid chain; its full sequence is MVTSNQLGFARLLMQLCVKNVQSFFLALLRWLSMQVSGAHVQQTPARKISRPESRTSKQKEGSRAPFTTPSSVNYHFTRQCNYKCGFCFHTAKTSFVLPIEEAKRGLRLLKEAGMEKINFSGGEPFVHQKGSFLGELVLYCKQELQLPSVSIVSNGSLIRESWFQKYGDYLDILAISCDSFIEETNQLIGRAQGRKSHLDNLHKVRNWCREYKVAFKINSVINTYNVEEDMTEQITALNPVRWKVFQCLLIEGENAGENSLREAEKFVISDQQFQDFLERHQSIQCLVPESNQKMRDSYLILDEYMRFLDCREGRKDPSKSILDVGVEEAIKFSGFDEKMFLMRGGKYVWSKADMKLEW.

Positions 43-67 are disordered; that stretch reads QTPARKISRPESRTSKQKEGSRAPF. Residues 50-63 show a composition bias toward basic and acidic residues; that stretch reads SRPESRTSKQKEGS. Residues 67-287 enclose the Radical SAM core domain; it reads FTTPSSVNYH…LERHQSIQCL (221 aa). 3 residues coordinate [4Fe-4S] cluster: cysteine 81, cysteine 85, and cysteine 88.

This sequence belongs to the radical SAM superfamily. RSAD2 family. The cofactor is [4Fe-4S] cluster.

The protein resides in the endoplasmic reticulum membrane. Functionally, interferon-inducible iron-sulfur (4FE-4S) cluster-binding antiviral protein which plays a major role in the cell antiviral state induced by type I and type II interferon. In Danio rerio (Zebrafish), this protein is S-adenosylmethionine-dependent nucleotide dehydratase RSAD2.